Here is a 99-residue protein sequence, read N- to C-terminus: Large ribosomal subunit protein P1 (99 aa).

As to quaternary structure, part of the 50S ribosomal subunit. Homodimer, it forms part of the ribosomal stalk which helps the ribosome interact with GTP-bound translation factors. Forms both a pentameric uL10/P0(P1)2(P1)2 and heptameric uL10/P0(P1)2(P1)2(P1)2 complex, where uL10/P0 forms an elongated spine to which the P1 dimers bind in a sequential fashion. The proportion of heptameric complexes increases during cell growth.

Forms part of the ribosomal stalk, playing a central role in the interaction of the ribosome with GTP-bound translation factors. The protein is Large ribosomal subunit protein P1 of Methanococcus vannielii.